The sequence spans 255 residues: Large ribosomal subunit protein uL4 (255 aa).

The protein belongs to the universal ribosomal protein uL4 family. In terms of assembly, part of the 50S ribosomal subunit.

One of the primary rRNA binding proteins, this protein initially binds near the 5'-end of the 23S rRNA. It is important during the early stages of 50S assembly. It makes multiple contacts with different domains of the 23S rRNA in the assembled 50S subunit and ribosome. Its function is as follows. Forms part of the polypeptide exit tunnel. The sequence is that of Large ribosomal subunit protein uL4 from Thermoplasma volcanium (strain ATCC 51530 / DSM 4299 / JCM 9571 / NBRC 15438 / GSS1).